The primary structure comprises 62 residues: Photosystem II reaction center protein Z (62 aa).

Helical transmembrane passes span 8–28 and 41–61; these read AVFA…VVFA and FSGT…NSLI.

It belongs to the PsbZ family. In terms of assembly, PSII is composed of 1 copy each of membrane proteins PsbA, PsbB, PsbC, PsbD, PsbE, PsbF, PsbH, PsbI, PsbJ, PsbK, PsbL, PsbM, PsbT, PsbY, PsbZ, Psb30/Ycf12, at least 3 peripheral proteins of the oxygen-evolving complex and a large number of cofactors. It forms dimeric complexes.

The protein resides in the plastid. It localises to the chloroplast thylakoid membrane. Functionally, may control the interaction of photosystem II (PSII) cores with the light-harvesting antenna, regulates electron flow through the 2 photosystem reaction centers. PSII is a light-driven water plastoquinone oxidoreductase, using light energy to abstract electrons from H(2)O, generating a proton gradient subsequently used for ATP formation. This chain is Photosystem II reaction center protein Z, found in Amborella trichopoda.